Here is a 143-residue protein sequence, read N- to C-terminus: D-aminoacyl-tRNA deacylase (143 aa).

The short motif at 135 to 136 is the Gly-cisPro motif, important for rejection of L-amino acids element; it reads GP.

It belongs to the DTD family. As to quaternary structure, homodimer.

The protein localises to the cytoplasm. It catalyses the reaction glycyl-tRNA(Ala) + H2O = tRNA(Ala) + glycine + H(+). It carries out the reaction a D-aminoacyl-tRNA + H2O = a tRNA + a D-alpha-amino acid + H(+). Functionally, an aminoacyl-tRNA editing enzyme that deacylates mischarged D-aminoacyl-tRNAs. Also deacylates mischarged glycyl-tRNA(Ala), protecting cells against glycine mischarging by AlaRS. Acts via tRNA-based rather than protein-based catalysis; rejects L-amino acids rather than detecting D-amino acids in the active site. By recycling D-aminoacyl-tRNA to D-amino acids and free tRNA molecules, this enzyme counteracts the toxicity associated with the formation of D-aminoacyl-tRNA entities in vivo and helps enforce protein L-homochirality. The sequence is that of D-aminoacyl-tRNA deacylase from Mycolicibacterium gilvum (strain PYR-GCK) (Mycobacterium gilvum (strain PYR-GCK)).